Consider the following 196-residue polypeptide: UPF0301 protein BT_1078 (196 aa).

This sequence belongs to the UPF0301 (AlgH) family.

The polypeptide is UPF0301 protein BT_1078 (Bacteroides thetaiotaomicron (strain ATCC 29148 / DSM 2079 / JCM 5827 / CCUG 10774 / NCTC 10582 / VPI-5482 / E50)).